Reading from the N-terminus, the 445-residue chain is Branched-chain amino acid permease BraB (445 aa).

12 helical membrane-spanning segments follow: residues 11–31 (IIIG…IYPP), 45–65 (IGGF…AIAL), 79–99 (PVFG…LFAI), 122–142 (LSLL…ALNP), 158–178 (FTII…GLGA), 192–212 (FLEG…VVVV), 233–253 (AGVI…YLGA), 275–295 (YLFG…ACLT), 311–331 (LIPA…SLII), 339–359 (IIAF…VIIV), 375–395 (IACL…AAGF), and 415–435 (IGWV…TLFI).

It belongs to the branched chain amino acid transporter family.

The protein localises to the cell membrane. Branched-chain amino acid transport system which is involved in the uptake of isoleucine, valine and probably leucine. Together with BcaP and BrnQ, plays an important role in the activation of CodY, a branched-chain amino acid-responsive transcriptional regulator that controls the expression of several dozen transcription units in B.subtilis. The polypeptide is Branched-chain amino acid permease BraB (Bacillus subtilis (strain 168)).